We begin with the raw amino-acid sequence, 266 residues long: Enterotoxin type C-2 (266 aa).

The signal sequence occupies residues 1–27 (MNKSRFISCVILIFALILVLFTPNVLA). Residues Asp36, His74, Glu98, Glu107, and Asp110 each coordinate Zn(2+). Cysteines 120 and 137 form a disulfide. His145, Glu146, and His149 together coordinate Zn(2+).

Belongs to the staphylococcal/streptococcal toxin family. Interacts with host MHC class II molecules composed of alpha/HLA-DRA and beta/HLA-DRB1 chains. The cofactor is Zn(2+).

The protein localises to the secreted. Functionally, staphylococcal enterotoxin that activates the host immune system by binding as unprocessed molecules to major histocompatibility (MHC) complex class II and T-cell receptor (TCR) molecules. In turn, this ternary complex activates a large number of T-lymphocytes initiating a systemic release of pro-inflammatory cytokines. Also causes the intoxication staphylococcal food poisoning syndrome. This is Enterotoxin type C-2 (entC2) from Staphylococcus aureus.